The following is a 299-amino-acid chain: MTDNTRLRIAMQKSGRLSDDSRELLARCGIKINLHTQRLIAMAENMPIDILRVRDDDIPGLVMDGVVDLGIIGENVLEEELLNRRAQGEDPRYFTLRRLDFGGCRLSLATPVDEAWDGPLSLNGKRIATSYPHLLKRYLDQKGISFKSCLLNGSVEVAPRAGLADAICDLVSTGATLEANGLREVEVIYRSKACLIQRDGEMEESKQQLIDKLMIRIQGVIQARESKYIMMHAPTERLDEVIALLPGAERPTILPLAGDQQRVAMHMVSSETLFWETMEKLKALGASSILVLPIEKMME.

Belongs to the ATP phosphoribosyltransferase family. Long subfamily. In terms of assembly, equilibrium between an active dimeric form, an inactive hexameric form and higher aggregates. Interconversion between the various forms is largely reversible and is influenced by the natural substrates and inhibitors of the enzyme. The cofactor is Mg(2+).

The protein localises to the cytoplasm. It catalyses the reaction 1-(5-phospho-beta-D-ribosyl)-ATP + diphosphate = 5-phospho-alpha-D-ribose 1-diphosphate + ATP. Its pathway is amino-acid biosynthesis; L-histidine biosynthesis; L-histidine from 5-phospho-alpha-D-ribose 1-diphosphate: step 1/9. Feedback inhibited by histidine. Functionally, catalyzes the condensation of ATP and 5-phosphoribose 1-diphosphate to form N'-(5'-phosphoribosyl)-ATP (PR-ATP). Has a crucial role in the pathway because the rate of histidine biosynthesis seems to be controlled primarily by regulation of HisG enzymatic activity. The sequence is that of ATP phosphoribosyltransferase from Escherichia coli O17:K52:H18 (strain UMN026 / ExPEC).